Reading from the N-terminus, the 174-residue chain is Large ribosomal subunit protein uL10 (174 aa).

The protein belongs to the universal ribosomal protein uL10 family. Part of the ribosomal stalk of the 50S ribosomal subunit. The N-terminus interacts with L11 and the large rRNA to form the base of the stalk. The C-terminus forms an elongated spine to which L12 dimers bind in a sequential fashion forming a multimeric L10(L12)X complex.

In terms of biological role, forms part of the ribosomal stalk, playing a central role in the interaction of the ribosome with GTP-bound translation factors. The sequence is that of Large ribosomal subunit protein uL10 from Vesicomyosocius okutanii subsp. Calyptogena okutanii (strain HA).